Consider the following 236-residue polypeptide: Transcription repressor MYB6 (236 aa).

HTH myb-type domains are found at residues 9-61 and 62-116; these read KAHT…INYL and RPDL…KRKL. 2 DNA-binding regions (H-T-H motif) span residues 37 to 61 and 89 to 112; these read WRSLPKSAGLLRCGKSCRLRWINYL and WSLIAGRLPGRTDNEIKNYWNTHI. Residues 159–181 form a disordered region; the sequence is PKTENSSDNGASTSGTTTDEDLR. A compositionally biased stretch (polar residues) spans 162–175; sequence ENSSDNGASTSGTT.

As to quaternary structure, interacts with BHLH012/MYC1 and BHLH042/TT8. In terms of tissue distribution, expressed in roots, stems, flower buds, and siliques.

It localises to the nucleus. The chain is Transcription repressor MYB6 (MYB6) from Arabidopsis thaliana (Mouse-ear cress).